The following is a 453-amino-acid chain: uncharacterized protein (453 aa).

Disordered stretches follow at residues Y140–Q161 and T311–S332.

This is an uncharacterized protein from Caenorhabditis elegans.